The following is a 119-amino-acid chain: NADH-quinone oxidoreductase subunit A (119 aa).

The next 3 helical transmembrane spans lie at 9 to 29 (VILF…LGFL), 63 to 83 (LVAI…PWAV), and 88 to 108 (IGAT…VGFV).

The protein belongs to the complex I subunit 3 family. In terms of assembly, NDH-1 is composed of 14 different subunits. Subunits NuoA, H, J, K, L, M, N constitute the membrane sector of the complex.

It is found in the cell inner membrane. The enzyme catalyses a quinone + NADH + 5 H(+)(in) = a quinol + NAD(+) + 4 H(+)(out). Its function is as follows. NDH-1 shuttles electrons from NADH, via FMN and iron-sulfur (Fe-S) centers, to quinones in the respiratory chain. The immediate electron acceptor for the enzyme in this species is believed to be ubiquinone. Couples the redox reaction to proton translocation (for every two electrons transferred, four hydrogen ions are translocated across the cytoplasmic membrane), and thus conserves the redox energy in a proton gradient. The chain is NADH-quinone oxidoreductase subunit A from Leptothrix cholodnii (strain ATCC 51168 / LMG 8142 / SP-6) (Leptothrix discophora (strain SP-6)).